The primary structure comprises 429 residues: Ribosomal RNA small subunit methyltransferase B (429 aa).

S-adenosyl-L-methionine contacts are provided by residues 254–260 (CAAPGGK), Asp277, Asp303, and Asp322. Cys375 acts as the Nucleophile in catalysis.

It belongs to the class I-like SAM-binding methyltransferase superfamily. RsmB/NOP family.

It is found in the cytoplasm. The enzyme catalyses cytidine(967) in 16S rRNA + S-adenosyl-L-methionine = 5-methylcytidine(967) in 16S rRNA + S-adenosyl-L-homocysteine + H(+). Functionally, specifically methylates the cytosine at position 967 (m5C967) of 16S rRNA. The chain is Ribosomal RNA small subunit methyltransferase B from Shigella flexneri serotype 5b (strain 8401).